The sequence spans 244 residues: Proteasome subunit alpha (244 aa).

The protein belongs to the peptidase T1A family. In terms of assembly, the 20S proteasome core is composed of 14 alpha and 14 beta subunits that assemble into four stacked heptameric rings, resulting in a barrel-shaped structure. The two inner rings, each composed of seven catalytic beta subunits, are sandwiched by two outer rings, each composed of seven alpha subunits. The catalytic chamber with the active sites is on the inside of the barrel. Has a gated structure, the ends of the cylinder being occluded by the N-termini of the alpha-subunits. Is capped by the proteasome-associated ATPase, ARC.

The protein localises to the cytoplasm. It functions in the pathway protein degradation; proteasomal Pup-dependent pathway. With respect to regulation, the formation of the proteasomal ATPase ARC-20S proteasome complex, likely via the docking of the C-termini of ARC into the intersubunit pockets in the alpha-rings, may trigger opening of the gate for substrate entry. Interconversion between the open-gate and close-gate conformations leads to a dynamic regulation of the 20S proteasome proteolysis activity. In terms of biological role, component of the proteasome core, a large protease complex with broad specificity involved in protein degradation. The chain is Proteasome subunit alpha from Xylanimonas cellulosilytica (strain DSM 15894 / JCM 12276 / CECT 5975 / KCTC 9989 / LMG 20990 / NBRC 107835 / XIL07).